The primary structure comprises 229 residues: tRNA (guanine-N(1)-)-methyltransferase (229 aa).

S-adenosyl-L-methionine is bound by residues Gly109 and 129-134 (IGDFIL).

The protein belongs to the RNA methyltransferase TrmD family. In terms of assembly, homodimer.

Its subcellular location is the cytoplasm. It carries out the reaction guanosine(37) in tRNA + S-adenosyl-L-methionine = N(1)-methylguanosine(37) in tRNA + S-adenosyl-L-homocysteine + H(+). Functionally, specifically methylates guanosine-37 in various tRNAs. The polypeptide is tRNA (guanine-N(1)-)-methyltransferase (Helicobacter pylori (strain Shi470)).